Reading from the N-terminus, the 424-residue chain is Myb family transcription factor RLI1 (424 aa).

The segment at 144–165 (RPQKRDSGERTPLPPPSQQQHQ) is disordered. Residues 238 to 298 (APSKTRIRWT…HLQKYRIAKY (61 aa)) enclose the HTH myb-type domain. Positions 269-294 (PKGILKLMNSDGLTIYHIKSHLQKYR) form a DNA-binding region, H-T-H motif. The LHEQLE motif lies at 342–347 (LHEQLE). A coiled-coil region spans residues 342–391 (LHEQLEIQRNLQLRIEEQGKRLQKMFEDQLKASRSVMEPQELDDVVAFAA).

This sequence belongs to the MYB-CC family. Homodimer. Interacts with PHR2 in the nucleus. Interacts with SPX1 and SPX2 in the nucleus; these interactions prevent binding to the promoters of target genes, thus regulating negatively leaf inclination in response to phosphate (Pi) starvation.

Its subcellular location is the nucleus. In terms of biological role, transcription factor binding to specific DNA sequences of target genes promoters, such as the motif R1BS 5'-NAKATNCN-3' and the motif P1BS 5'-GNATATNC-3' to trigger their expression. Nitrate-induced component involved in modulating phosphate (Pi) response and homeostasis together with PHR2; activates directly the expression of Pi starvation-induced (PSI) genes upon nitrate disponibility, thus triggering the nitrate-induced phosphate response (NIPR) promoting Pi uptake activity. Involved in the shoot architecture; positively regulates leaf inclination by affecting lamina joint cell elongation via the direct promotion of ILI4/BU1 and BC1 genes expression, especially in response to phosphate (Pi) availability. Regulates both brassinolide (BL) biosynthesis and signaling by directly activating BL-biosynthesis and signaling genes. This chain is Myb family transcription factor RLI1, found in Oryza sativa subsp. indica (Rice).